The sequence spans 115 residues: MDQYIRAIESQYIRKDFPEFRPGDTVRVYVKVREGNRERTQAFEGIVIKIRGGGVGKTFTVRRIGAGGIGVERIFPFASPAVEKVQVLRKGKVRRAKLYYVRNIRGKIRIKERRD.

It belongs to the bacterial ribosomal protein bL19 family.

Its function is as follows. This protein is located at the 30S-50S ribosomal subunit interface and may play a role in the structure and function of the aminoacyl-tRNA binding site. This Kosmotoga olearia (strain ATCC BAA-1733 / DSM 21960 / TBF 19.5.1) protein is Large ribosomal subunit protein bL19.